The chain runs to 251 residues: MNGFTVVIPARMASSRLPGKPLADIAGKPMVVRVAEQAAKSRAARVVVATDHADILAACAAHGVEAVLTREDHASGTDRLAEVAAKLALPDDALVVNVQGDEPLIQPELINRLAELLAGADAPVATLAHALHDAADHFNPNVVKVALDKHGRALYFSRAPIPYARDAYAADRSALPAGLPVYRHIGMYGYRAGFLAAYAGLEPGPLEQYEALEQLRVLWHGYGIAVALADEAPAAGVDTPEDLERVRRLFA.

Belongs to the KdsB family.

The protein localises to the cytoplasm. It catalyses the reaction 3-deoxy-alpha-D-manno-oct-2-ulosonate + CTP = CMP-3-deoxy-beta-D-manno-octulosonate + diphosphate. The protein operates within nucleotide-sugar biosynthesis; CMP-3-deoxy-D-manno-octulosonate biosynthesis; CMP-3-deoxy-D-manno-octulosonate from 3-deoxy-D-manno-octulosonate and CTP: step 1/1. Its pathway is bacterial outer membrane biogenesis; lipopolysaccharide biosynthesis. Its function is as follows. Activates KDO (a required 8-carbon sugar) for incorporation into bacterial lipopolysaccharide in Gram-negative bacteria. The polypeptide is 3-deoxy-manno-octulosonate cytidylyltransferase (Chromobacterium violaceum (strain ATCC 12472 / DSM 30191 / JCM 1249 / CCUG 213 / NBRC 12614 / NCIMB 9131 / NCTC 9757 / MK)).